Consider the following 642-residue polypeptide: MPIITLPDGSQRQFAHAVSVMDVAADIGPGLAKACIAGRVNGELVDACELIEADASLAIITAKDEEGLDILRHSCAHLLGHAIKQLWPQTKMAIGPVIDNGFYYDIDLDRTLTDEDLAALEERMLALAAKDYDVIKKKVSWQEARDVFEARGETYKVEILDQNIARDDQPGLYHHEEYIDMCRGPHVPNMRHCHHFKLQKMSGAYWRGDSNNKMLQRIYGTAWADKKQLKSYLQRLEEAAKRDHRKIGKQLDLYHMQEEAPGMVFWHNDGWTIFRELETFIRGKLKEYDYQEVKGPFMMDRVLWERSGHWEKYAQAMFTTQSENREYAIKPMNCPGHVQIFNQGLKSYRDLPLRMAEFGSCHRNEPSGSLHGLMRVRGFTQDDAHIFCTEEQIMEEVSACIRMVYDVYGTFGFENIVVKLSTRPEQRIGSDEAWDRAEAALAEALVLNGLKYDLQPGEGAFYGPKIEFTLHDCLDRAWQCGTVQLDFALPGRLGATYVGEDNERHVPVMIHRAILGSLERFIGILTEEYAGLFPTWLAPTQAVVMNITDNQADYAVKVAKALNDAGLRAKADLRNEKIGFKIREHTLKRVPFMLVCGDKEVEAGKIAVRTRKGADLGTYPVEELIALLTQEVQTRGQKKVEE.

The TGS domain occupies 1–61; that stretch reads MPIITLPDGS…EADASLAIIT (61 aa). Residues 243–534 form a catalytic region; the sequence is DHRKIGKQLD…LTEEYAGLFP (292 aa). Residues Cys334, His385, and His511 each coordinate Zn(2+).

This sequence belongs to the class-II aminoacyl-tRNA synthetase family. As to quaternary structure, homodimer. Zn(2+) serves as cofactor.

It is found in the cytoplasm. The enzyme catalyses tRNA(Thr) + L-threonine + ATP = L-threonyl-tRNA(Thr) + AMP + diphosphate + H(+). Functionally, catalyzes the attachment of threonine to tRNA(Thr) in a two-step reaction: L-threonine is first activated by ATP to form Thr-AMP and then transferred to the acceptor end of tRNA(Thr). Also edits incorrectly charged L-seryl-tRNA(Thr). This Aeromonas hydrophila subsp. hydrophila (strain ATCC 7966 / DSM 30187 / BCRC 13018 / CCUG 14551 / JCM 1027 / KCTC 2358 / NCIMB 9240 / NCTC 8049) protein is Threonine--tRNA ligase.